The chain runs to 391 residues: Transmembrane protein 79 (391 aa).

The disordered stretch occupies residues 1–114 (MTEPETLALL…TKSEEPFKED (114 aa)). Residues 1 to 200 (MTEPETLALL…GREALRAVAS (200 aa)) lie on the Cytoplasmic side of the membrane. Residues 103–114 (APTKSEEPFKED) are compositionally biased toward basic and acidic residues. Residues 201–221 (VVAALIFFPCLLYGAYAFLPF) traverse the membrane as a helical segment. Residues 222 to 240 (DAPRLPTMSSRLVYTLRCG) are Extracellular-facing. The helical transmembrane segment at 241-261 (VFATFPIVLGLLVYGLSLLCF) threads the bilayer. At 262 to 279 (SALRPFGEPRREVEIHRQ) the chain is on the cytoplasmic side. The helical transmembrane segment at 280 to 300 (YVAQSVQLFILYFFNLAVLST) threads the bilayer. Over 301–309 (YLPQDTLKL) the chain is Extracellular. A helical membrane pass occupies residues 310–330 (LPLLTGLFAISRLIYWLTFAV). The Cytoplasmic portion of the chain corresponds to 331-339 (GRSFRGFGY). A helical membrane pass occupies residues 340–360 (GLTFLPLLAMLVWNLYYMFVV). Topologically, residues 361–391 (EPERMLTASESRLDYPDHARSVSDYRPRSWG) are extracellular.

In terms of tissue distribution, expressed in the epidermis of the skin. Expressed in epithelial cells of the outermost layer of the stratum granulosum (SG) and in hair follicles (at protein level).

The protein resides in the lysosome. It localises to the golgi apparatus. Its subcellular location is the trans-Golgi network. It is found in the membrane. Its function is as follows. Contributes to the epidermal integrity and skin barrier function. Plays a role in the lamellar granule (LG) secretory system and in the stratum corneum (SC) epithelial cell formation. The sequence is that of Transmembrane protein 79 (Tmem79) from Mus musculus (Mouse).